Reading from the N-terminus, the 278-residue chain is Glycyl-dTMP PLP-dependent decarboxylase (278 aa).

The protein belongs to the pyridoxal-phosphate-dependent aminodecarboxylase family.

It catalyses the reaction 5-C(alpha)-glycyl-dTMP in DNA + H(+) = 5-aminoethyl-dUMP in DNA + CO2. Converts 5-Calpha-glycinylthymidine (Calpha-GlyT) into 5-aminoethyl-2'-deoxyuridine (5-NedU) as a step in the pathway leading to thymidine hypermodifications in the viral genome. As a final result of the pathway of hypermodification, 5-aminoethyl-2'-deoxyuridine (5-NedU) substitutes for about 30% of thymidines in the viral DNA. These modifications probably prevent degradation of viral genome by the host restriction-modification antiviral defense system. The protein is Glycyl-dTMP PLP-dependent decarboxylase of Pseudomonas aeruginosa.